The sequence spans 545 residues: GMP synthase [glutamine-hydrolyzing] (545 aa).

The 195-residue stretch at 17-211 (TVLVLDMGSQ…ATKICGARPD (195 aa)) folds into the Glutamine amidotransferase type-1 domain. The active-site Nucleophile is C93. Active-site residues include H185 and E187. The GMPS ATP-PPase domain maps to 212–420 (WKMDDFSARE…LGIHEELIGR (209 aa)). Residue 240-246 (SGGVDST) coordinates ATP. R313, D482, K537, and E543 together coordinate XMP.

As to quaternary structure, homodimer. Mg(2+) serves as cofactor.

The protein resides in the cytoplasm. The protein localises to the cytosol. It catalyses the reaction XMP + L-glutamine + ATP + H2O = GMP + L-glutamate + AMP + diphosphate + 2 H(+). It functions in the pathway purine metabolism; GMP biosynthesis; GMP from XMP (L-Gln route): step 1/1. Its function is as follows. Catalyzes the conversion of xanthine monophosphate (XMP) to GMP in the presence of glutamine and ATP through an adenyl-XMP intermediate. The sequence is that of GMP synthase [glutamine-hydrolyzing] (GUA1) from Gibberella zeae (strain ATCC MYA-4620 / CBS 123657 / FGSC 9075 / NRRL 31084 / PH-1) (Wheat head blight fungus).